A 244-amino-acid polypeptide reads, in one-letter code: Phosphatidylserine decarboxylase proenzyme (244 aa).

Ser-212 acts as the Schiff-base intermediate with substrate; via pyruvic acid in catalysis. Position 212 is a pyruvic acid (Ser); by autocatalysis (Ser-212).

This sequence belongs to the phosphatidylserine decarboxylase family. PSD-A subfamily. Heterodimer of a large membrane-associated beta subunit and a small pyruvoyl-containing alpha subunit. It depends on pyruvate as a cofactor. Post-translationally, is synthesized initially as an inactive proenzyme. Formation of the active enzyme involves a self-maturation process in which the active site pyruvoyl group is generated from an internal serine residue via an autocatalytic post-translational modification. Two non-identical subunits are generated from the proenzyme in this reaction, and the pyruvate is formed at the N-terminus of the alpha chain, which is derived from the carboxyl end of the proenzyme. The post-translation cleavage follows an unusual pathway, termed non-hydrolytic serinolysis, in which the side chain hydroxyl group of the serine supplies its oxygen atom to form the C-terminus of the beta chain, while the remainder of the serine residue undergoes an oxidative deamination to produce ammonia and the pyruvoyl prosthetic group on the alpha chain.

Its subcellular location is the cell membrane. It carries out the reaction a 1,2-diacyl-sn-glycero-3-phospho-L-serine + H(+) = a 1,2-diacyl-sn-glycero-3-phosphoethanolamine + CO2. It participates in phospholipid metabolism; phosphatidylethanolamine biosynthesis; phosphatidylethanolamine from CDP-diacylglycerol: step 2/2. In terms of biological role, catalyzes the formation of phosphatidylethanolamine (PtdEtn) from phosphatidylserine (PtdSer). The sequence is that of Phosphatidylserine decarboxylase proenzyme from Granulibacter bethesdensis (strain ATCC BAA-1260 / CGDNIH1).